The chain runs to 197 residues: Guanylyl cyclase-activating protein 2 (197 aa).

Residue G2 is the site of N-myristoyl glycine attachment. EF-hand domains are found at residues 15-50, 51-86, 87-122, and 138-173; these read DVAE…QDNQ, EAAD…VLRG, KLEH…IYNL, and SPEQ…DKWV. Ca(2+) is bound by residues D64, N66, D68, T70, E75, D100, D102, N104, C106, E111, D151, N153, D155, Q157, and E162.

Low expression in retina.

Its function is as follows. Stimulates guanylyl cyclase 1 (GC1) and GC2 when free calcium ions concentration is low and inhibits guanylyl cyclases when free calcium ions concentration is elevated. This Ca(2+)-sensitive regulation of guanylyl cyclase (GC) is a key event in recovery of the dark state of rod photoreceptors following light exposure. The chain is Guanylyl cyclase-activating protein 2 (GUCA1B) from Lithobates pipiens (Northern leopard frog).